Here is a 146-residue protein sequence, read N- to C-terminus: Large ribosomal subunit protein uL15 (146 aa).

The segment at 1–55 (MGLRLNELSPGVGAKKTAQRRGRGIGSGLGKTGGRGVKGQKSRSGSSIRSGFEGG) is disordered. Gly residues predominate over residues 24–37 (GIGSGLGKTGGRGV).

Belongs to the universal ribosomal protein uL15 family. As to quaternary structure, part of the 50S ribosomal subunit.

Functionally, binds to the 23S rRNA. The polypeptide is Large ribosomal subunit protein uL15 (Psychrobacter cryohalolentis (strain ATCC BAA-1226 / DSM 17306 / VKM B-2378 / K5)).